A 304-amino-acid polypeptide reads, in one-letter code: MYTFKRYLTKTKDTLIRQFKAANAKKLIKIKYPILAVMGFFVLLIVFVLRDYFLKLGIGHSTSTGFITINVITNSGVGFSLFNQNPAVPYLLQSLLTIIFLITFIFSKNKALIVLLPLITFGGLANVIDRSVPVTLSNGTVETNSVLDYFQFFRSSAIFNFADICIVTGFALIFLTFVVDIFLDLKKKNKKTVSTTNKQLHGWKSIPLEERSKWNDWADHKCVFCNQQMMINSNEVICSNEECAYIDLINIAKPISVEKQENCLICNSEMIKKVDDKQASFLACSRFNEKCYYTKSCKQIENNA.

Transmembrane regions (helical) follow at residues 28–48 (IKIK…IVFV), 86–106 (PAVP…TFIF), and 112–132 (LIVL…DRSV). Catalysis depends on residues Asp148 and Asp163. The chain crosses the membrane as a helical span at residues 163–183 (DICIVTGFALIFLTFVVDIFL).

Belongs to the peptidase A8 family.

It is found in the cell membrane. The enzyme catalyses Release of signal peptides from bacterial membrane prolipoproteins. Hydrolyzes -Xaa-Yaa-Zaa-|-(S,diacylglyceryl)Cys-, in which Xaa is hydrophobic (preferably Leu), and Yaa (Ala or Ser) and Zaa (Gly or Ala) have small, neutral side chains.. It participates in protein modification; lipoprotein biosynthesis (signal peptide cleavage). Its function is as follows. This protein specifically catalyzes the removal of signal peptides from prolipoproteins. In Mycoplasmoides gallisepticum (strain R(low / passage 15 / clone 2)) (Mycoplasma gallisepticum), this protein is Lipoprotein signal peptidase.